The sequence spans 160 residues: Small ribosomal subunit protein bS6 (160 aa).

The segment at 96–160 (RKVKRFIPRA…PRTRKVSKEQ (65 aa)) is disordered. Positions 126 to 145 (TTDASKTEASTEATASKQSE) are enriched in low complexity. Residues 151–160 (PRTRKVSKEQ) show a composition bias toward basic residues.

The protein belongs to the bacterial ribosomal protein bS6 family.

Functionally, binds together with bS18 to 16S ribosomal RNA. The protein is Small ribosomal subunit protein bS6 of Metamycoplasma arthritidis (strain 158L3-1) (Mycoplasma arthritidis).